A 101-amino-acid polypeptide reads, in one-letter code: Small ribosomal subunit protein uS14 (101 aa).

The protein belongs to the universal ribosomal protein uS14 family. Part of the 30S ribosomal subunit. Contacts proteins S3 and S10.

Functionally, binds 16S rRNA, required for the assembly of 30S particles and may also be responsible for determining the conformation of the 16S rRNA at the A site. The chain is Small ribosomal subunit protein uS14 from Opitutus terrae (strain DSM 11246 / JCM 15787 / PB90-1).